The following is a 152-amino-acid chain: Methylglyoxal synthase (152 aa).

Residues 1–152 form the MGS-like domain; the sequence is MELTTRTIAA…YDRYLQQRLK (152 aa). Residues His-19, Lys-23, 45–48, and 65–66 each bind substrate; these read TGTT and SG. The Proton donor/acceptor role is filled by Asp-71. His-98 contacts substrate.

This sequence belongs to the methylglyoxal synthase family.

The catalysed reaction is dihydroxyacetone phosphate = methylglyoxal + phosphate. Its function is as follows. Catalyzes the formation of methylglyoxal from dihydroxyacetone phosphate. The polypeptide is Methylglyoxal synthase (Yersinia enterocolitica serotype O:8 / biotype 1B (strain NCTC 13174 / 8081)).